The primary structure comprises 98 residues: Feather keratin 2 (98 aa).

Serine 2 carries the post-translational modification N-acetylserine.

Belongs to the avian keratin family. As to quaternary structure, the avian keratins (F-ker, S-ker, C-ker and B-ker) are a complex mixture of very similar polypeptides.

This Gallus gallus (Chicken) protein is Feather keratin 2.